Consider the following 772-residue polypeptide: Hyperosmolality-gated Ca2+ permeable channel 1.1 (772 aa).

At 1 to 5 the chain is on the extracellular side; the sequence is MATLK. The helical transmembrane segment at 6–28 threads the bilayer; sequence DIGVSAGINILTAFIFFIIFAFL. The Cytoplasmic portion of the chain corresponds to 29 to 100; it reads RLQPFNDRVY…AGLDSVVYLR (72 aa). The helical transmembrane segment at 101-122 threads the bilayer; it reads IYWLGLKIFAPIAMLAWAVLVP. At 123–159 the chain is on the extracellular side; the sequence is VNWTNNELELAKHFKNVTSSDIDKLTISNIPEGSNRF. Asn-138 is a glycosylation site (N-linked (GlcNAc) asparagine). A helical transmembrane segment spans residues 160-180; sequence WAHIIMAYAFTIWTCYMLMKE. Residues 181–372 lie on the Cytoplasmic side of the membrane; that stretch reads YETVANMRLQ…PNLAIPYVSL (192 aa). A cytoplasmic region required for homodimerization region spans residues 339–344; that stretch reads QTTQTR. Residues 373-398 traverse the membrane as a helical segment; the sequence is TVRRLVMNVAFFFLTFFFIIPIAFVQ. Over 399–424 the chain is Extracellular; sequence SLATIEGIEKVAPFLKVIIEKDFIKS. A helical membrane pass occupies residues 425–450; that stretch reads LIQGLLAGIALKLFLIFLPAILMTMS. Over 451–461 the chain is Cytoplasmic; it reads KFEGFTSVSFL. A helical membrane pass occupies residues 462-485; it reads ERRSASRYYIFNLVNVFLGSVIAG. Over 486-509 the chain is Extracellular; that stretch reads AAFEQLNSFLNQSPNQIPKTIGMA. Residues 510 to 538 traverse the membrane as a helical segment; it reads IPMKATFFITYIMVDGWAGVAGEILMLKP. Residues 539–566 are Cytoplasmic-facing; it reads LIIYHLKNAFLVKTEKDREEAMNPGSIG. A helical transmembrane segment spans residues 567–587; it reads FNTGEPQIQLYFLLGLVYAPV. Thr-588 is a topological domain (extracellular). A helical membrane pass occupies residues 589–606; the sequence is PMLLPFILVFFALAYVVY. The Cytoplasmic portion of the chain corresponds to 607-624; it reads RHQIINVYNQEYESAAAF. The helical transmembrane segment at 625 to 647 threads the bilayer; the sequence is WPDVHGRVITALIISQLLLMGLL. Topologically, residues 648 to 653 are extracellular; that stretch reads GTKHAA. Residues 654–674 traverse the membrane as a helical segment; that stretch reads SAAPFLIALPVITIGFHRFCK. Residues 675–772 are Cytoplasmic-facing; sequence GRFEPAFVRY…SLAVINGKEV (98 aa). The tract at residues 686–688 is cytoplasmic region required for homodimerization; it reads LQE. Positions 743–772 are disordered; that stretch reads KRQSRRNTPAPSRISGESSPSLAVINGKEV. Positions 748–763 are enriched in polar residues; sequence RNTPAPSRISGESSPS.

The protein belongs to the CSC1 (TC 1.A.17) family. Homodimer. Expressed in leaves, flowers, roots and guard cells.

It is found in the cell membrane. Activated by mechanical pressure. Acts as a hyperosmolarity-gated non-selective cation channel that permeates Ca(2+) ions. Shows the following permeability sequence: K(+) &gt; Ba(2+) = Ca(2+) &gt; Na(+) = Mg(2+) = Cs(+). Mechanosensitive ion channel that converts mechanical stimuli into a flow of ions: activated in response to membrane stretch and poke. The chain is Hyperosmolality-gated Ca2+ permeable channel 1.1 from Arabidopsis thaliana (Mouse-ear cress).